Reading from the N-terminus, the 167-residue chain is uncharacterized protein (167 aa).

This is an uncharacterized protein from Acanthamoeba polyphaga (Amoeba).